Consider the following 515-residue polypeptide: UBP3-associated protein BRE5 (515 aa).

The 133-residue stretch at Ile-8 to Phe-140 folds into the NTF2 domain. Low complexity predominate over residues Gln-157–Ala-166. Disordered regions lie at residues Gln-157 to Ser-410 and Lys-485 to Asp-515. A compositionally biased stretch (basic and acidic residues) spans Glu-168–Lys-201. A Phosphoserine modification is found at Ser-187. Polar residues predominate over residues Asp-202–Glu-213. Composition is skewed to basic and acidic residues over residues Leu-262–Ser-282 and Glu-299–Pro-319. Residue Ser-282 is modified to Phosphoserine. Polar residues predominate over residues Ser-330–Pro-341. Residue Thr-336 is modified to Phosphothreonine. Residue Ser-340 is modified to Phosphoserine. A compositionally biased stretch (basic and acidic residues) spans Ile-374–Asn-396. A Phosphoserine modification is found at Ser-398. The 77-residue stretch at Tyr-418–Asn-494 folds into the RRM domain. The segment covering Lys-489–Thr-503 has biased composition (polar residues). The segment covering Arg-504 to Asp-515 has biased composition (basic residues).

In terms of assembly, heterotetramer with UBP3; contains two molecules of BRE5 and two molecules of UBP3. Forms a complex composed of CDC48, DOA1, deubiquitinase UBP3 and probably BRE5. Within the complex, interacts (via C-terminus) with CDC48; the interaction is direct and UBP3-independent.

Its function is as follows. Has a role in de-ubiquitination. In conjunction with UBP3, cleaves ubiquitin, leading to the subsequent mono-ubiquitination of sec23. This chain is UBP3-associated protein BRE5 (BRE5), found in Saccharomyces cerevisiae (strain ATCC 204508 / S288c) (Baker's yeast).